Consider the following 234-residue polypeptide: Opacity protein opA65 (234 aa).

Residue Ala1 is a signal peptide. Positions 154–179 (TVTPKPKNGTQGGPVKSTSPIPAYHE) are disordered.

Belongs to the opacity porin family.

It localises to the cell outer membrane. Implicated in a number of adherence functions. OPA proteins are implicated in pathogenesis and are subject to phase variation. In Neisseria gonorrhoeae, this protein is Opacity protein opA65.